A 177-amino-acid polypeptide reads, in one-letter code: MSRIAKAPVDVLSGVEVTIAGQEVTVKGKNGTLSRVFNDAVEVVQEENQLKASPREGVANGWAQAGTARSLLDAMVIGVSQGFEKKLQLNGVGYRAAAQGKKLNLTLGFSHPVAYEMPEGISVETPSQTEIVVKGADKQLVGQVAANIRGYRPPEPYKGKGVRYADEVVRRKEAKKK.

This sequence belongs to the universal ribosomal protein uL6 family. In terms of assembly, part of the 50S ribosomal subunit.

In terms of biological role, this protein binds to the 23S rRNA, and is important in its secondary structure. It is located near the subunit interface in the base of the L7/L12 stalk, and near the tRNA binding site of the peptidyltransferase center. The polypeptide is Large ribosomal subunit protein uL6 (Pseudoalteromonas atlantica (strain T6c / ATCC BAA-1087)).